We begin with the raw amino-acid sequence, 382 residues long: Myb-like transcription factor (382 aa).

3 Myb-like domains span residues 1–57 (MPRS…RWSK), 58–108 (ITGA…QHCL), and 109–160 (DPSL…ITLF). Over residues 194–210 (MSMDASEDGDDAEDDQT) the composition is skewed to acidic residues. A disordered region spans residues 194-240 (MSMDASEDGDDAEDDQTPDSYTSISTSSFDDILGGSSSSPSAADTMT). Residues 211-240 (PDSYTSISTSSFDDILGGSSSSPSAADTMT) show a composition bias toward polar residues.

Its subcellular location is the nucleus. Functionally, transcription factor; part of the gene cluster that mediates the biosynthesis of 1233A, a natural compound known as an inhibitor of HMG-CoA synthase in the mevalonate pathway and with antibacterial and antifungal activities. Involved in hygromycin B-induced transcriptional control of the cluster. The polypeptide is Myb-like transcription factor (Fusarium sp).